The primary structure comprises 415 residues: Gamma-glutamyl phosphate reductase (415 aa).

It belongs to the gamma-glutamyl phosphate reductase family.

It localises to the cytoplasm. It catalyses the reaction L-glutamate 5-semialdehyde + phosphate + NADP(+) = L-glutamyl 5-phosphate + NADPH + H(+). It functions in the pathway amino-acid biosynthesis; L-proline biosynthesis; L-glutamate 5-semialdehyde from L-glutamate: step 2/2. Functionally, catalyzes the NADPH-dependent reduction of L-glutamate 5-phosphate into L-glutamate 5-semialdehyde and phosphate. The product spontaneously undergoes cyclization to form 1-pyrroline-5-carboxylate. This chain is Gamma-glutamyl phosphate reductase, found in Listeria monocytogenes serotype 4a (strain HCC23).